The following is a 541-amino-acid chain: Metal transporter Nramp6 (541 aa).

Over residues 1-18 (MAPLPAAATATASSAATP) the composition is skewed to low complexity. The tract at residues 1 to 44 (MAPLPAAATATASSAATPADDEAHSLLPSTPSNEEDDDDLEERA) is disordered. The next 12 helical transmembrane spans lie at 87-107 (LWLF…PGNL), 120-140 (TLLW…LLAA), 172-192 (VAMV…IKIL), 196-216 (FLPL…FLSL), 224-244 (LEAV…WMFT), 270-290 (AVGV…SALV), 316-336 (IALA…AKGF), 358-378 (FGGG…AAGQ), 404-424 (IRSL…ALFF), 436-456 (WLNV…ITLV), 474-494 (VTWT…LDFF), and 502-522 (LSGS…LYLI).

Belongs to the NRAMP (TC 2.A.55) family.

It is found in the membrane. Functionally, probable metal transporter. The sequence is that of Metal transporter Nramp6 (NRAMP6) from Oryza sativa subsp. japonica (Rice).